The sequence spans 593 residues: La-related protein 7 (593 aa).

Residues 1-11 (MTAIETDTPSN) show a composition bias toward polar residues. The segment at 1–28 (MTAIETDTPSNKVKEDESTDLRKDREKK) is disordered. The segment covering 12–24 (KVKEDESTDLRKD) has biased composition (basic and acidic residues). An HTH La-type RNA-binding domain is found at 30-121 (RSRVKQLLAD…RRRFPLGEKP (92 aa)). The RRM domain maps to 127-205 (RTVYVELLPK…PRKAGMFPKT (79 aa)). The interval 191–363 (PPEEAPRKAG…STEEEKDAVD (173 aa)) is disordered. The span at 231-240 (KKKKKKKSKA) shows a compositional bias: basic residues. Residues 248-259 (AEEDTKEQDMDI) are compositionally biased toward acidic residues. Basic and acidic residues-rich tracts occupy residues 295–307 (ERAE…EKVR), 314–340 (SSSE…DEKP), and 348–363 (QECK…DAVD). A xRRM domain is found at 461–574 (QFVCGVIGKI…TEKLIAKAEK (114 aa)).

Belongs to the LARP7 family. As to quaternary structure, core component of the 7SK RNP complex. Associates with box C/D small nucleolar ribonucleoprotein (snoRNP) complexes.

It is found in the nucleus. The protein localises to the nucleoplasm. RNA-binding protein that specifically binds distinct small nuclear RNA (snRNAs) and regulates their processing and function. Specifically binds the 7SK snRNA (7SK RNA) and acts as a core component of the 7SK ribonucleoprotein (RNP) complex, thereby acting as a negative regulator of transcription elongation by RNA polymerase II. The 7SK RNP complex sequesters the positive transcription elongation factor b (P-TEFb) in a large inactive 7SK RNP complex preventing RNA polymerase II phosphorylation and subsequent transcriptional elongation. The 7SK RNP complex also promotes snRNA gene transcription by RNA polymerase II via interaction with the little elongation complex (LEC). LARP7 specifically binds to the highly conserved 3'-terminal U-rich stretch of 7SK RNA; on stimulation, remains associated with 7SK RNA, whereas P-TEFb is released from the complex. LARP7 also acts as a regulator of mRNA splicing fidelity by promoting U6 snRNA processing. Specifically binds U6 snRNAs and associates with a subset of box C/D RNP complexes: promotes U6 snRNA 2'-O-methylation by facilitating U6 snRNA loading into box C/D RNP complexes. U6 snRNA 2'-O-methylation is required for mRNA splicing fidelity. The polypeptide is La-related protein 7 (Xenopus tropicalis (Western clawed frog)).